The primary structure comprises 333 residues: Perchlorate reductase subunit beta (333 aa).

Residues 12–40 (LTYVTDLNKCIGCQTCTVACKKLWTTGPG) form the 4Fe-4S ferredoxin-type 1 domain. Residues Cys21, Cys24, Cys27, and Cys31 each coordinate [4Fe-4S] cluster. The tract at residues 101–121 (KERVRPSPTPRSAPNWDEDQG) is disordered. 4Fe-4S ferredoxin-type domains lie at 128 to 159 (NSFF…KREQ) and 161 to 190 (GIVV…FNPV). [4Fe-4S] cluster-binding residues include Cys137, Cys140, and Cys145. [3Fe-4S] cluster-binding residues include Cys149, Cys170, and Cys176. Residues Cys180, Cys197, Cys200, Cys212, and Cys216 each coordinate [4Fe-4S] cluster.

As to quaternary structure, heterotrimer of alpha, beta and gamma subunits. The cofactor is [3Fe-4S] cluster. Requires [4Fe-4S] cluster as cofactor.

It is found in the periplasm. Its function is as follows. Component of the perchlorate reductase that catalyzes the reduction of perchlorate to chlorite and allows anaerobic growth on perchlorate as the sole electron acceptor. The beta subunit may be responsible for electron transfer to the catalytic alpha subunit PcrA. The chain is Perchlorate reductase subunit beta (pcrB) from Dechloromonas aromatica (strain RCB).